The following is a 264-amino-acid chain: Protein ADMETOS (264 aa).

As to expression, paternally imprinted expression in the endosperm.

Its function is as follows. Product of a dosage-sensitive gene that contributes to the maintenance of paternally and maternally imprinted gene expression in the endosperm in order to balance parental contributions. Underlies postzygotic reproductive isolation by promoting triploid seed arrest in a genetic dosage-dependent manner, thus being a component of postzygotic interploidy hybridization barriers. The chain is Protein ADMETOS from Arabidopsis thaliana (Mouse-ear cress).